A 324-amino-acid chain; its full sequence is Methionyl-tRNA formyltransferase (324 aa).

Residue 109-112 (SILP) participates in (6S)-5,6,7,8-tetrahydrofolate binding.

This sequence belongs to the Fmt family.

The catalysed reaction is L-methionyl-tRNA(fMet) + (6R)-10-formyltetrahydrofolate = N-formyl-L-methionyl-tRNA(fMet) + (6S)-5,6,7,8-tetrahydrofolate + H(+). Attaches a formyl group to the free amino group of methionyl-tRNA(fMet). The formyl group appears to play a dual role in the initiator identity of N-formylmethionyl-tRNA by promoting its recognition by IF2 and preventing the misappropriation of this tRNA by the elongation apparatus. The sequence is that of Methionyl-tRNA formyltransferase from Acidothermus cellulolyticus (strain ATCC 43068 / DSM 8971 / 11B).